Here is a 156-residue protein sequence, read N- to C-terminus: Ribosomal RNA large subunit methyltransferase H (156 aa).

Residues leucine 73, glycine 104, and 123–128 contribute to the S-adenosyl-L-methionine site; that span reads ISSMTL.

The protein belongs to the RNA methyltransferase RlmH family. Homodimer.

The protein resides in the cytoplasm. It carries out the reaction pseudouridine(1915) in 23S rRNA + S-adenosyl-L-methionine = N(3)-methylpseudouridine(1915) in 23S rRNA + S-adenosyl-L-homocysteine + H(+). Functionally, specifically methylates the pseudouridine at position 1915 (m3Psi1915) in 23S rRNA. This is Ribosomal RNA large subunit methyltransferase H from Burkholderia vietnamiensis (strain G4 / LMG 22486) (Burkholderia cepacia (strain R1808)).